Here is a 479-residue protein sequence, read N- to C-terminus: MSPQTETKASVGFKAGVKEYKLTYYTPEYETKDTDILAAFRVTPQPGVPPEEAGAAVAAESSTGTWTTVWTDGLTSLDRYKGRCYHIEPVPGEETQFIAYVAYPLDLFEEGSVTNMFTSIVGNVFGFKALAALRLEDLRIPPAYTKTFQGPPHGIQVERDKLNKYGRPLLGCTIKPKLGLSAKNYGRAVYECLRGGLDFTKDDENVNSQPFMRWRDRFLFCAEAIYKSQAETGEIKGHYLNATAGTCEEMIKRAVFARELGVPIVMHDYLTGGFTANTSLAHYCRDNGLLLHIHRAMHAVIDRQKNHGMHFRVLAKALRLSGGDHIHAGTVVGKLEGDRESTLGFVDLLRDDYVEKDRSRGIFFTQDWVSLPGVLPVASGGIHVWHMPALTEIFGDDSVLQFGGGTLGHPWGNAPGAVANRVALEACVQARNEGRDLAVEGNEIIREACKWSPELAAACEVWKEIRFNFPTIDKLDGQE.

A propeptide spanning residues methionine 1–serine 2 is cleaved from the precursor. Positions 123 and 173 each coordinate substrate. Lysine 175 acts as the Proton acceptor in catalysis. Lysine 177 provides a ligand contact to substrate. 3 residues coordinate Mg(2+): lysine 201, aspartate 203, and glutamate 204. Lysine 201 carries the N6-carboxylysine modification. Position 208 is a phosphoserine (serine 208). Catalysis depends on histidine 294, which acts as the Proton acceptor. The substrate site is built by arginine 295 and histidine 327. Phosphothreonine is present on threonine 330. Serine 379 is a substrate binding site.

This sequence belongs to the RuBisCO large chain family. Type I subfamily. Heterohexadecamer of 8 large chains and 8 small chains; disulfide-linked. The disulfide link is formed within the large subunit homodimers. Mg(2+) serves as cofactor. The disulfide bond which can form in the large chain dimeric partners within the hexadecamer appears to be associated with oxidative stress and protein turnover.

The protein resides in the plastid. The protein localises to the chloroplast. The catalysed reaction is 2 (2R)-3-phosphoglycerate + 2 H(+) = D-ribulose 1,5-bisphosphate + CO2 + H2O. It carries out the reaction D-ribulose 1,5-bisphosphate + O2 = 2-phosphoglycolate + (2R)-3-phosphoglycerate + 2 H(+). Functionally, ruBisCO catalyzes two reactions: the carboxylation of D-ribulose 1,5-bisphosphate, the primary event in carbon dioxide fixation, as well as the oxidative fragmentation of the pentose substrate in the photorespiration process. Both reactions occur simultaneously and in competition at the same active site. This is Ribulose bisphosphate carboxylase large chain from Crucihimalaya wallichii (Rock-cress).